A 280-amino-acid polypeptide reads, in one-letter code: 3-methyl-2-oxobutanoate hydroxymethyltransferase (280 aa).

The Mg(2+) site is built by aspartate 49 and aspartate 88. 3-methyl-2-oxobutanoate contacts are provided by residues 49–50, aspartate 88, and lysine 118; that span reads DS. A Mg(2+)-binding site is contributed by glutamate 120. Catalysis depends on glutamate 187, which acts as the Proton acceptor.

This sequence belongs to the PanB family. In terms of assembly, homodecamer; pentamer of dimers. The cofactor is Mg(2+).

The protein localises to the cytoplasm. It carries out the reaction 3-methyl-2-oxobutanoate + (6R)-5,10-methylene-5,6,7,8-tetrahydrofolate + H2O = 2-dehydropantoate + (6S)-5,6,7,8-tetrahydrofolate. The protein operates within cofactor biosynthesis; (R)-pantothenate biosynthesis; (R)-pantoate from 3-methyl-2-oxobutanoate: step 1/2. Functionally, catalyzes the reversible reaction in which hydroxymethyl group from 5,10-methylenetetrahydrofolate is transferred onto alpha-ketoisovalerate to form ketopantoate. This is 3-methyl-2-oxobutanoate hydroxymethyltransferase from Xanthobacter autotrophicus (strain ATCC BAA-1158 / Py2).